Consider the following 168-residue polypeptide: MTQLIMGIDPGTLVSGYAIILVEQRYKIRAHSYGAIRLSSKDSLTQRYKQLFQTISGVLNDITPDAVVLETQYVHKNPQSTIKLGMARGVLVLAAALRDIPVFEYAPNVAKRAVVGRGNASKQQVQLMVSKMLNIPDVLNANCEDIADAFALAICHAHTSSYDFLGVR.

Active-site residues include aspartate 9, glutamate 70, and aspartate 145. 3 residues coordinate Mg(2+): aspartate 9, glutamate 70, and aspartate 145.

This sequence belongs to the RuvC family. Homodimer which binds Holliday junction (HJ) DNA. The HJ becomes 2-fold symmetrical on binding to RuvC with unstacked arms; it has a different conformation from HJ DNA in complex with RuvA. In the full resolvosome a probable DNA-RuvA(4)-RuvB(12)-RuvC(2) complex forms which resolves the HJ. It depends on Mg(2+) as a cofactor.

It localises to the cytoplasm. The catalysed reaction is Endonucleolytic cleavage at a junction such as a reciprocal single-stranded crossover between two homologous DNA duplexes (Holliday junction).. The RuvA-RuvB-RuvC complex processes Holliday junction (HJ) DNA during genetic recombination and DNA repair. Endonuclease that resolves HJ intermediates. Cleaves cruciform DNA by making single-stranded nicks across the HJ at symmetrical positions within the homologous arms, yielding a 5'-phosphate and a 3'-hydroxyl group; requires a central core of homology in the junction. The consensus cleavage sequence is 5'-(A/T)TT(C/G)-3'. Cleavage occurs on the 3'-side of the TT dinucleotide at the point of strand exchange. HJ branch migration catalyzed by RuvA-RuvB allows RuvC to scan DNA until it finds its consensus sequence, where it cleaves and resolves the cruciform DNA. This Chlamydia felis (strain Fe/C-56) (Chlamydophila felis) protein is Crossover junction endodeoxyribonuclease RuvC.